Consider the following 155-residue polypeptide: FHA domain-containing protein FhaB (155 aa).

Residues 6–28 (LQLTRVGFLLLLWLFIWSVLRIL) traverse the membrane as a helical segment. Thr36 is modified (phosphothreonine). Positions 83-132 (VLIGRADDSTLVLTDDYASTRHARLSPRGSEWYVEDLGSTNGTYLDRAKV) constitute an FHA domain.

Post-translationally, phosphorylated by PknB. Dephosphorylated by PstP.

Its subcellular location is the cell membrane. The protein is FHA domain-containing protein FhaB (fhaB) of Mycolicibacterium smegmatis (strain ATCC 700084 / mc(2)155) (Mycobacterium smegmatis).